The sequence spans 274 residues: Ribosomal RNA small subunit methyltransferase A (274 aa).

Asparagine 28, leucine 30, glycine 55, glutamate 77, aspartate 103, and asparagine 122 together coordinate S-adenosyl-L-methionine.

This sequence belongs to the class I-like SAM-binding methyltransferase superfamily. rRNA adenine N(6)-methyltransferase family. RsmA subfamily.

It localises to the cytoplasm. It catalyses the reaction adenosine(1518)/adenosine(1519) in 16S rRNA + 4 S-adenosyl-L-methionine = N(6)-dimethyladenosine(1518)/N(6)-dimethyladenosine(1519) in 16S rRNA + 4 S-adenosyl-L-homocysteine + 4 H(+). Functionally, specifically dimethylates two adjacent adenosines (A1518 and A1519) in the loop of a conserved hairpin near the 3'-end of 16S rRNA in the 30S particle. May play a critical role in biogenesis of 30S subunits. This chain is Ribosomal RNA small subunit methyltransferase A, found in Rhizobium meliloti (strain 1021) (Ensifer meliloti).